Here is a 101-residue protein sequence, read N- to C-terminus: NADH-quinone oxidoreductase subunit K (101 aa).

3 consecutive transmembrane segments (helical) span residues L4–L24, I30–F50, and F65–F85.

It belongs to the complex I subunit 4L family. NDH-1 is composed of 14 different subunits. Subunits NuoA, H, J, K, L, M, N constitute the membrane sector of the complex.

The protein localises to the cell inner membrane. It carries out the reaction a quinone + NADH + 5 H(+)(in) = a quinol + NAD(+) + 4 H(+)(out). NDH-1 shuttles electrons from NADH, via FMN and iron-sulfur (Fe-S) centers, to quinones in the respiratory chain. The immediate electron acceptor for the enzyme in this species is believed to be ubiquinone. Couples the redox reaction to proton translocation (for every two electrons transferred, four hydrogen ions are translocated across the cytoplasmic membrane), and thus conserves the redox energy in a proton gradient. The protein is NADH-quinone oxidoreductase subunit K of Ruegeria pomeroyi (strain ATCC 700808 / DSM 15171 / DSS-3) (Silicibacter pomeroyi).